The sequence spans 215 residues: Elongation factor Ts (215 aa).

The involved in Mg(2+) ion dislocation from EF-Tu stretch occupies residues threonine 80–alanine 83.

Belongs to the EF-Ts family.

It is found in the cytoplasm. Associates with the EF-Tu.GDP complex and induces the exchange of GDP to GTP. It remains bound to the aminoacyl-tRNA.EF-Tu.GTP complex up to the GTP hydrolysis stage on the ribosome. The sequence is that of Elongation factor Ts from Acetivibrio thermocellus (strain ATCC 27405 / DSM 1237 / JCM 9322 / NBRC 103400 / NCIMB 10682 / NRRL B-4536 / VPI 7372) (Clostridium thermocellum).